The chain runs to 322 residues: DNA repair and recombination protein RadA (322 aa).

105 to 112 (GMYGSGKT) contacts ATP.

Belongs to the eukaryotic RecA-like protein family.

Involved in DNA repair and in homologous recombination. Binds and assemble on single-stranded DNA to form a nucleoprotein filament. Hydrolyzes ATP in a ssDNA-dependent manner and promotes DNA strand exchange between homologous DNA molecules. In Methanococcus maripaludis (strain C5 / ATCC BAA-1333), this protein is DNA repair and recombination protein RadA.